We begin with the raw amino-acid sequence, 2113 residues long: Unconventional myosin-VIIb (2113 aa).

In terms of domain architecture, Myosin motor spans 65 to 760; sequence QGVDDMIRLG…QDTVLEIRRS (696 aa). Residue 158 to 165 coordinates ATP; it reads GESGAGKT. The actin-binding stretch occupies residues 637 to 659; that stretch reads LDQLMRILTNCQPYFVRCIKPNE. 6 IQ domains span residues 745 to 765, 763 to 792, 786 to 815, 809 to 838, 832 to 861, and 855 to 884; these read IFLK…ALDG, LDGA…AAVT, QRRA…GFER, ILVG…RIVQ, MRQR…AVVI, and KRRA…TGPQ. Ser904 bears the Phosphoserine mark. The tract at residues 962–1578 is mediates interaction with ANKS4B; the sequence is EEEVDSLAEY…STQLLSLLAM (617 aa). A MyTH4 1 domain is found at 989 to 1189; it reads HIQKPLRYPL…PTWLELQAVK (201 aa). Positions 1194-1503 constitute an FERM 1 domain; the sequence is IPIQVILATG…GGLKERSVFA (310 aa). Thr1339 carries the phosphothreonine modification. Ser1368 bears the Phosphoserine mark. The tract at residues 1497–2113 is mediates interaction with CDHR2, CDHR5 and USH1C; the sequence is KERSVFAMAL…GFRAPAPANP (617 aa). The SH3 domain maps to 1498–1564; sequence ERSVFAMALQ…PTACLYTIPS (67 aa). 2 consecutive MyTH4 domains span residues 1641–1790 and 1790–1896; these read YSPE…KAAE and EQNV…LNVT. A Phosphoserine modification is found at Ser1642. An FERM 2 domain is found at 1796–2099; the sequence is LHHEVYLPND…SYVQQLLNTV (304 aa).

This sequence belongs to the TRAFAC class myosin-kinesin ATPase superfamily. Myosin family. Part of the IMAC/intermicrovillar adhesion complex/intermicrovillar tip-link complex composed of ANKS4B, MYO7B, USH1C, CDHR2 and CDHR5. Interacts with CDHR2. Interacts with CDHR5. Interacts with USH1C. Interacts with ANKS4B; requires initial interaction with USH1C. Interacts with CALML4; the interaction mediates the association of CALML4 with the IMAC/intermicrovillar adhesion complex. Expressed primarily in kidney and intestine. Detected in proximal tubule cells of the kidney and enterocytes of the intestine, specifically the distal tips of apical microvilli on these transporting epithelial cells (at protein level).

It is found in the cytoplasm. The protein localises to the cytoskeleton. The protein resides in the cell projection. It localises to the microvillus. In terms of biological role, myosins are actin-based motor molecules with ATPase activity. Their highly divergent tails are presumed to bind to membranous compartments, which would be moved relative to actin filaments. As part of the intermicrovillar adhesion complex/IMAC plays a role in epithelial brush border differentiation, controlling microvilli organization and length. May link the complex to the actin core bundle of microvilli. This chain is Unconventional myosin-VIIb (Myo7b), found in Mus musculus (Mouse).